A 262-amino-acid polypeptide reads, in one-letter code: 3-methyl-2-oxobutanoate hydroxymethyltransferase (262 aa).

Mg(2+) is bound by residues Asp-31 and Asp-70. Residues Asp-31–Ser-32, Asp-70, and Lys-99 contribute to the 3-methyl-2-oxobutanoate site. Glu-101 lines the Mg(2+) pocket. Catalysis depends on Glu-168, which acts as the Proton acceptor.

It belongs to the PanB family. As to quaternary structure, homodecamer; pentamer of dimers. It depends on Mg(2+) as a cofactor.

It localises to the cytoplasm. It catalyses the reaction 3-methyl-2-oxobutanoate + (6R)-5,10-methylene-5,6,7,8-tetrahydrofolate + H2O = 2-dehydropantoate + (6S)-5,6,7,8-tetrahydrofolate. Its pathway is cofactor biosynthesis; coenzyme A biosynthesis. Catalyzes the reversible reaction in which hydroxymethyl group from 5,10-methylenetetrahydrofolate is transferred onto alpha-ketoisovalerate to form ketopantoate. The polypeptide is 3-methyl-2-oxobutanoate hydroxymethyltransferase (Cenarchaeum symbiosum (strain A)).